The sequence spans 594 residues: MATATEIRKDLRTPIVCVMGHVDHGKTSLLDRIRGTAVVDKEAGAITQHIGATEVPLQTIQTLCKGMIGGNIVVPGLLFIDTPGHHAFTNLRSRGGALADLAVLVVDINEGFQPQTVEAIKILKQFKTPFVIAANKIDRIHGWTAKNNSPFLQTFNSQPDHVKGIIETKTYELVGRMSDLGFSSDRYDRIRDFTRNIGIIPISARTGEGIPDLLMILIGLAQRFLEESLKFQVTGPGVGTILEVKEERGLGYTIDTIIYDGEIRVGDTIVIGGREKPYSTKVRALLKPKPNREIRVEERFDRVNKVTAASGVKILAPELEKAMAGSQVRVTKESNVEDIIKEIEQEMEQAKIVTDEVGVMVKADTLGSLEAIVNELREAKIPIGRADVGDISKRDIINAETVNDPMYRVMLGFNVTILPDANDYLQTTDIKIFNSDVIYHLIDDFRKWETEQRALAEKKKFAEIVRPGKVKYLPNCTFRQSKPAVIGLQIMGGMLKPGVTLIKPDGSKIGVVRQIQERNENISIATVGKEVAVSIDGPTAGRQINEGEIYFVDVPEGHSKVLEFQLKDTIKQDELETLMEFLAIKRKDNPFWGR.

Residues 11–226 form the tr-type G domain; that stretch reads LRTPIVCVMG…LIGLAQRFLE (216 aa). Residues 20 to 27 are G1; it reads GHVDHGKT. 20–27 provides a ligand contact to GTP; that stretch reads GHVDHGKT. The segment at 45 to 49 is G2; it reads AITQH. A G3 region spans residues 81 to 84; sequence DTPG. GTP is bound by residues 81 to 85 and 135 to 138; these read DTPGH and NKID. The tract at residues 135-138 is G4; it reads NKID. The segment at 203-205 is G5; sequence SAR.

It belongs to the TRAFAC class translation factor GTPase superfamily. Classic translation factor GTPase family. IF-2 subfamily.

In terms of biological role, function in general translation initiation by promoting the binding of the formylmethionine-tRNA to ribosomes. Seems to function along with eIF-2. This is Probable translation initiation factor IF-2 from Methanocella arvoryzae (strain DSM 22066 / NBRC 105507 / MRE50).